The following is an 88-amino-acid chain: Beta-insect excitatory toxin BmKIT1 (88 aa).

The N-terminal stretch at 1-18 (MKFFLIFLVIFPIMGVLG) is a signal peptide. An LCN-type CS-alpha/beta domain is found at 20–83 (KNGYAVDSSG…IKDATKSYCD (64 aa)). Cystine bridges form between cysteine 34-cysteine 55, cysteine 40-cysteine 60, cysteine 44-cysteine 62, and cysteine 56-cysteine 82. At isoleucine 87 the chain carries Isoleucine amide.

Belongs to the long (4 C-C) scorpion toxin superfamily. Sodium channel inhibitor family. Beta subfamily. Expressed by the venom gland.

Its subcellular location is the secreted. Functionally, excitatory insect beta-toxins induce a spastic paralysis. They bind voltage-independently at site-4 of sodium channels (Nav) and shift the voltage of activation toward more negative potentials thereby affecting sodium channel activation and promoting spontaneous and repetitive firing. This toxin is active only on insects. In Olivierus martensii (Manchurian scorpion), this protein is Beta-insect excitatory toxin BmKIT1.